Consider the following 396-residue polypeptide: Elongation factor Tu (396 aa).

A tr-type G domain is found at 10-206; the sequence is KPHVNVGTIG…AMDEYIPTPE (197 aa). The G1 stretch occupies residues 19-26; the sequence is GHVDHGKT. A GTP-binding site is contributed by 19 to 26; the sequence is GHVDHGKT. Position 26 (Thr-26) interacts with Mg(2+). The G2 stretch occupies residues 60–64; sequence GITIA. The tract at residues 81–84 is G3; it reads DCPG. GTP is bound by residues 81–85 and 136–139; these read DCPGH and NKAD. The interval 136 to 139 is G4; sequence NKAD. Positions 174 to 176 are G5; sequence SAL.

This sequence belongs to the TRAFAC class translation factor GTPase superfamily. Classic translation factor GTPase family. EF-Tu/EF-1A subfamily. In terms of assembly, monomer.

It localises to the cytoplasm. The catalysed reaction is GTP + H2O = GDP + phosphate + H(+). In terms of biological role, GTP hydrolase that promotes the GTP-dependent binding of aminoacyl-tRNA to the A-site of ribosomes during protein biosynthesis. The protein is Elongation factor Tu of Alkalilimnicola ehrlichii (strain ATCC BAA-1101 / DSM 17681 / MLHE-1).